A 138-amino-acid polypeptide reads, in one-letter code: Ribulose bisphosphate carboxylase small subunit (138 aa).

Belongs to the RuBisCO small chain family. Heterohexadecamer of 8 large and 8 small subunits.

The protein resides in the plastid. It localises to the chloroplast. Its function is as follows. RuBisCO catalyzes two reactions: the carboxylation of D-ribulose 1,5-bisphosphate, the primary event in carbon dioxide fixation, as well as the oxidative fragmentation of the pentose substrate in the photorespiration process. Both reactions occur simultaneously and in competition at the same active site. Although the small subunit is not catalytic it is essential for maximal activity. The sequence is that of Ribulose bisphosphate carboxylase small subunit from Cyanidioschyzon merolae (strain NIES-3377 / 10D) (Unicellular red alga).